The sequence spans 255 residues: 1-(5-phosphoribosyl)-5-[(5-phosphoribosylamino)methylideneamino] imidazole-4-carboxamide isomerase (255 aa).

The active-site Proton acceptor is Asp-8. Asp-129 functions as the Proton donor in the catalytic mechanism.

It belongs to the HisA/HisF family.

It is found in the cytoplasm. It catalyses the reaction 1-(5-phospho-beta-D-ribosyl)-5-[(5-phospho-beta-D-ribosylamino)methylideneamino]imidazole-4-carboxamide = 5-[(5-phospho-1-deoxy-D-ribulos-1-ylimino)methylamino]-1-(5-phospho-beta-D-ribosyl)imidazole-4-carboxamide. It functions in the pathway amino-acid biosynthesis; L-histidine biosynthesis; L-histidine from 5-phospho-alpha-D-ribose 1-diphosphate: step 4/9. The chain is 1-(5-phosphoribosyl)-5-[(5-phosphoribosylamino)methylideneamino] imidazole-4-carboxamide isomerase from Prochlorococcus marinus (strain AS9601).